The chain runs to 186 residues: Ribosome-recycling factor (186 aa).

This sequence belongs to the RRF family.

Its subcellular location is the cytoplasm. Functionally, responsible for the release of ribosomes from messenger RNA at the termination of protein biosynthesis. May increase the efficiency of translation by recycling ribosomes from one round of translation to another. The protein is Ribosome-recycling factor of Paraburkholderia xenovorans (strain LB400).